The following is a 455-amino-acid chain: T-box protein VegT-B (455 aa).

The segment at residues 57–230 (LWTQFHQEGT…HNPFAKGFRE (174 aa)) is a DNA-binding region (T-box). Positions 229 to 241 (REQERSHKRDDVL) are enriched in basic and acidic residues. 2 disordered regions span residues 229–276 (REQE…RIKE) and 295–350 (ANQG…RRLT). The span at 308 to 326 (GVNQEQQVPTSSSNFYIKS) shows a compositional bias: polar residues.

In terms of assembly, forms a repression complex on the promoters of the nodal/nr1 and siamois genes with the maternal factors tcf7l1/tcf3 and pouf5.1/oct-25. Interacts (via C-terminus) with tcf7l1/tcf3 (via N-terminus). Also interacts with the other POU-domain transcription factors pou5f1.2/oct-91 and pou5f1.3/oct-60. As to expression, maternally localized to the vegetal hemisphere of oocytes. Zygotic expression parallels blastopore formation and shifts from dorsal expression in the marginal zone of late blastula and early gastrula stages to a ventral/lateral expression at later stages. During neurula and tailbud stages, expressed in the posterior and anterior ends of the embryo. During tailbud stages, expressed in a subset of interneurons in the neural tube.

The protein localises to the nucleus. Functionally, transcription factor required for both mesoderm and endoderm formation in the embryo; signaling determinants and concentration levels may determine which germ layer is formed. Acts together with beta-catenin to activate genes that are responsible for mesoderm induction including wnt-8, eomes t/bra, siamois, mix1 and sox17. Directly binds to promoter DNA. Patterns the mesoderm along the dorsoventral and posterior axis. Activates siamois gene transcription when alone or in combination with beta-catenin, but inhibits siamois transcription in combination with pou5f1.1/oct-25. The chain is T-box protein VegT-B (vegt-b) from Xenopus laevis (African clawed frog).